The following is a 299-amino-acid chain: MSGPNPPGREPDEPESEPVSDTGDERASGNHLPPVAGGGDKLPSDQTGETDAYSRAYSAPESEHVTGGPYVPADLRLYDYDDYEESSDLDDELAAPRWPWVVGVAAIIAAVALVVSVSLLVTRPHTSKLATGDTTSSAPPVQDEITTTKPAPPPPPPAPPPTTEIPTATETQTVTVTPPPPPPPATTTAPPPATTTTAAAPPPTTTTPTGPRQVTYSVTGTKAPGDIISVTYVDAAGRRRTQHNVYIPWSMTVTPISQSDVGSVEASSLFRVSKLNCSITTSDGTVLSSNSNDGPQTSC.

The interval 1–72 is disordered; it reads MSGPNPPGRE…EHVTGGPYVP (72 aa). The helical transmembrane segment at 101-121 threads the bilayer; sequence VVGVAAIIAAVALVVSVSLLV. Polar residues predominate over residues 128-139; sequence KLATGDTTSSAP. Residues 128–213 are disordered; sequence KLATGDTTSS…TTTTPTGPRQ (86 aa). The segment covering 150 to 163 has biased composition (pro residues); sequence PAPPPPPPAPPPTT. A compositionally biased stretch (low complexity) spans 164-176; sequence EIPTATETQTVTV. Pro residues predominate over residues 177 to 193; it reads TPPPPPPPATTTAPPPA.

This sequence belongs to the MmpS family.

The protein resides in the cell membrane. The chain is Probable transport accessory protein MmpS3 (mmpS3) from Mycobacterium tuberculosis (strain CDC 1551 / Oshkosh).